The primary structure comprises 353 residues: Photosystem II D2 protein (353 aa).

T2 carries the post-translational modification N-acetylthreonine. T2 carries the post-translational modification Phosphothreonine. A helical membrane pass occupies residues 41–61 (CAYFALGGWFTGTTFVTSWYT). H118 is a binding site for chlorophyll a. Residues 125-141 (GFMLRQFELARPVQLRP) form a helical membrane-spanning segment. Pheophytin a-binding residues include Q130 and N143. Residues 153–166 (VFLSVFLIYPLGQS) traverse the membrane as a helical segment. H198 contributes to the chlorophyll a binding site. Residues 208–228 (AVLLCAIHGATVENTLFEDGD) form a helical membrane-spanning segment. A plastoquinone is bound by residues H215 and F262. H215 serves as a coordination point for Fe cation. H269 contributes to the Fe cation binding site. The chain crosses the membrane as a helical span at residues 279 to 295 (GLWMSAIGVVGLALNLR).

Belongs to the reaction center PufL/M/PsbA/D family. PSII is composed of 1 copy each of membrane proteins PsbA, PsbB, PsbC, PsbD, PsbE, PsbF, PsbH, PsbI, PsbJ, PsbK, PsbL, PsbM, PsbT, PsbX, PsbY, PsbZ, Psb30/Ycf12, at least 3 peripheral proteins of the oxygen-evolving complex and a large number of cofactors. It forms dimeric complexes. The D1/D2 heterodimer binds P680, chlorophylls that are the primary electron donor of PSII, and subsequent electron acceptors. It shares a non-heme iron and each subunit binds pheophytin, quinone, additional chlorophylls, carotenoids and lipids. There is also a Cl(-1) ion associated with D1 and D2, which is required for oxygen evolution. The PSII complex binds additional chlorophylls, carotenoids and specific lipids. serves as cofactor. In terms of processing, only phosphorylated in mesophyll cells, phosphorylation increases when cells are grown under high rather than low light regimes (70 vs 900 umol photons/m-2/s).

It is found in the plastid. Its subcellular location is the chloroplast thylakoid membrane. It catalyses the reaction 2 a plastoquinone + 4 hnu + 2 H2O = 2 a plastoquinol + O2. Photosystem II (PSII) is a light-driven water:plastoquinone oxidoreductase that uses light energy to abstract electrons from H(2)O, generating O(2) and a proton gradient subsequently used for ATP formation. It consists of a core antenna complex that captures photons, and an electron transfer chain that converts photonic excitation into a charge separation. The D1/D2 (PsbA/PsbD) reaction center heterodimer binds P680, the primary electron donor of PSII as well as several subsequent electron acceptors. D2 is needed for assembly of a stable PSII complex. The chain is Photosystem II D2 protein from Zea mays (Maize).